A 193-amino-acid polypeptide reads, in one-letter code: Orotate phosphoribosyltransferase (193 aa).

A 5-phospho-alpha-D-ribose 1-diphosphate-binding site is contributed by 116–124 (EDVVTTGKS). Orotate contacts are provided by T120 and R148.

This sequence belongs to the purine/pyrimidine phosphoribosyltransferase family. PyrE subfamily. Homodimer. Requires Mg(2+) as cofactor.

The catalysed reaction is orotidine 5'-phosphate + diphosphate = orotate + 5-phospho-alpha-D-ribose 1-diphosphate. The protein operates within pyrimidine metabolism; UMP biosynthesis via de novo pathway; UMP from orotate: step 1/2. In terms of biological role, catalyzes the transfer of a ribosyl phosphate group from 5-phosphoribose 1-diphosphate to orotate, leading to the formation of orotidine monophosphate (OMP). This is Orotate phosphoribosyltransferase from Clostridium tetani (strain Massachusetts / E88).